Reading from the N-terminus, the 705-residue chain is Lethal(3)malignant brain tumor-like protein 2 (705 aa).

The tract at residues 1–84 is disordered; sequence MEKPRSIEET…GTPRSLDGSG (84 aa). Ser13 carries the phosphoserine modification. Over residues 15–25 the composition is skewed to acidic residues; it reads PMEEEEDDDLE. Over residues 38–49 the composition is skewed to low complexity; sequence SSVGSESSSYLE. Residues 50 to 60 show a composition bias toward acidic residues; that stretch reads ESSEAENEDRE. At Ser67 the chain carries Phosphoserine. Residue Thr76 is modified to Phosphothreonine. An FCS-type zinc finger spans residues 81–116; sequence DGSGSEPAVCEMCGIVGTREAFFSKTKRFCSVSCSR. Zn(2+) is bound by residues Cys90, Cys93, Cys110, and Cys114. MBT repeat units lie at residues 179-283, 291-391, 397-500, and 508-604; these read FDWG…LVPP, TDWK…IKMS, MAHH…LTPP, and FNWE…LQPP. A Phosphoserine modification is found at Ser338. A Glycyl lysine isopeptide (Lys-Gly) (interchain with G-Cter in SUMO2) cross-link involves residue Lys405. The interval 608-665 is disordered; that stretch reads EPATPLKAKEATKKKKKQFGKKRKRIPPTKTRPLRQGSKKPLLEDDPQGARKISSEPV. Residues 619 to 634 show a composition bias toward basic residues; sequence TKKKKKQFGKKRKRIP. Glycyl lysine isopeptide (Lys-Gly) (interchain with G-Cter in SUMO2) cross-links involve residues Lys647, Lys659, and Lys675. The interval 680–705 is disordered; it reads DVASPDKASSPELPVSVENIKQETDD. Ser683, Ser688, and Ser689 each carry phosphoserine. Lys700 participates in a covalent cross-link: Glycyl lysine isopeptide (Lys-Gly) (interchain with G-Cter in SUMO1); alternate. Lys700 is covalently cross-linked (Glycyl lysine isopeptide (Lys-Gly) (interchain with G-Cter in SUMO2); alternate).

As to quaternary structure, part of the E2F6.com-1 complex in G0 phase composed of E2F6, MGA, MAX, TFDP1, CBX3, BAT8, EUHMTASE1, RING1, RNF2, MBLR, BAT8 and YAF2.

Its subcellular location is the nucleus. Functionally, putative Polycomb group (PcG) protein. PcG proteins maintain the transcriptionally repressive state of genes, probably via a modification of chromatin, rendering it heritably changed in its expressibility. Its association with a chromatin-remodeling complex suggests that it may contribute to prevent expression of genes that trigger the cell into mitosis. Binds to monomethylated and dimethylated 'Lys-20' on histone H4. Binds histone H3 peptides that are monomethylated or dimethylated on 'Lys-4', 'Lys-9' or 'Lys-27'. This Homo sapiens (Human) protein is Lethal(3)malignant brain tumor-like protein 2 (L3MBTL2).